A 488-amino-acid polypeptide reads, in one-letter code: Malonate-semialdehyde dehydrogenase (488 aa).

Residues A150, F152, K176, E179, R180, S229, and T251 each contribute to the NAD(+) site. Residue C284 is the Nucleophile of the active site. E382 serves as a coordination point for NAD(+).

Belongs to the aldehyde dehydrogenase family. IolA subfamily. Homotetramer.

It catalyses the reaction 3-oxopropanoate + NAD(+) + CoA + H2O = hydrogencarbonate + acetyl-CoA + NADH + H(+). The enzyme catalyses 2-methyl-3-oxopropanoate + NAD(+) + CoA + H2O = propanoyl-CoA + hydrogencarbonate + NADH + H(+). It functions in the pathway polyol metabolism; myo-inositol degradation into acetyl-CoA; acetyl-CoA from myo-inositol: step 7/7. Its function is as follows. Catalyzes the oxidation of malonate semialdehyde (MSA) and methylmalonate semialdehyde (MMSA) into acetyl-CoA and propanoyl-CoA, respectively. Is involved in a myo-inositol catabolic pathway. Bicarbonate, and not CO2, is the end-product of the enzymatic reaction. This is Malonate-semialdehyde dehydrogenase from Listeria monocytogenes serotype 4b (strain F2365).